The chain runs to 350 residues: MKTAWTRRSFLQSAALATATVITIAACGGNNQSSSGGSGQPVEVTLVSYAVTQAAYEQIIPKFAAQWKEKTGQEVRFNQSYGGSGSQTRAVIDGLEADVVALALESDINQIEKAGLIQPGWQQRVPNNGIITNSVVALVTQEGNPKGIKDWTDLTKPGVRIVTANPKTSGGARWNFLGAWGSVTQTGGTEEQALQFTTDIYKNVPILAKDARESTDVFTKGQADVLLNYENELILAQQKGEKVDYAIPPVNINIQGPVAVVDTYTDKHGTRKVSEAFVQFLFTPEAQAEFAKVGFRPALPEGVDPQLLAPFPKIQTWFTVADLGGWAKVQPEFFGDGGWFDKVQQAVAGR.

A signal peptide spans 1–40 (MKTAWTRRSFLQSAALATATVITIAACGGNNQSSSGGSGQ).

It belongs to the prokaryotic sulfate-binding protein family.

It localises to the periplasm. Functionally, this protein specifically binds sulfate and is involved in its transmembrane transport. The sequence is that of Sulfate-binding protein (sbpA) from Synechococcus elongatus (strain ATCC 33912 / PCC 7942 / FACHB-805) (Anacystis nidulans R2).